Reading from the N-terminus, the 679-residue chain is Single-strand DNA endonuclease ASTE1 (679 aa).

The segment at 351–400 (TILPTQVENMQQPNAHRISQPIRQIIYGLLLNASPHLDKTSWNALPPQPL) is interaction with SHLD2. Residues 625–645 (RSNSKKKRQKKQNTSCSKNRG) are disordered. Residues 626–635 (SNSKKKRQKK) are compositionally biased toward basic residues.

Belongs to the asteroid family. As to quaternary structure, interacts with SHLD1, SHLD2, SHLD3, RIF1 and MAD2L2/REV7.

Structure-specific DNA endonuclease that specifically cleaves single-stranded DNA and 3' overhang DNA. Contributes to the control of DNA double-strand break repair choice by antagonizing BRCA1-dependent homologous recombination (HR) and promoting non-homologous end-joining (NHEJ). Recruited to the single-stranded DNA ends by SHLD2 and cleaves the 3' exposed DNA ends, therefore inhibiting DNA end resection (necessary for HR) and promoting DNA end protection (necessary for NHEJ). In Pongo abelii (Sumatran orangutan), this protein is Single-strand DNA endonuclease ASTE1 (ASTE1).